The primary structure comprises 326 residues: Protein farnesyltransferase/geranylgeranyltransferase type-1 subunit alpha (326 aa).

PFTA repeat units follow at residues 55–89 (RSPR…ALNH), 90–124 (DLFE…KLGP), 126–160 (VAGR…ALGG), 161–194 (WEDE…QSPL), and 201–235 (MRES…DDKE).

Belongs to the protein prenyltransferase subunit alpha family. Heterodimer of an alpha and a beta subunit. It depends on Mg(2+) as a cofactor.

It catalyses the reaction L-cysteinyl-[protein] + (2E,6E)-farnesyl diphosphate = S-(2E,6E)-farnesyl-L-cysteinyl-[protein] + diphosphate. The enzyme catalyses geranylgeranyl diphosphate + L-cysteinyl-[protein] = S-geranylgeranyl-L-cysteinyl-[protein] + diphosphate. In terms of biological role, essential subunit of both the farnesyltransferase and the geranylgeranyltransferase complex. Contributes to the transfer of a farnesyl or geranylgeranyl moiety from farnesyl or geranylgeranyl diphosphate to a cysteine at the fourth position from the C-terminus of several proteins having the C-terminal sequence Cys-aliphatic-aliphatic-X. This Arabidopsis thaliana (Mouse-ear cress) protein is Protein farnesyltransferase/geranylgeranyltransferase type-1 subunit alpha (FTA).